The primary structure comprises 159 residues: Major latex protein 146 (159 aa).

It belongs to the MLP family. Laticifer.

It is found in the vacuole. The protein localises to the cytoplasmic vesicle. Not known; MLPs constitute up to 50% of the soluble latex protein. This chain is Major latex protein 146 (MLP146), found in Papaver somniferum (Opium poppy).